The following is a 692-amino-acid chain: Polyribonucleotide nucleotidyltransferase (692 aa).

Asp-484 and Asp-490 together coordinate Mg(2+). The KH domain maps to 551-614 (PKYFIHKISQ…ALVERVKSIT (64 aa)). An S1 motif domain is found at 620–688 (GAVYTGKVKT…NRGRIRLSRK (69 aa)).

It belongs to the polyribonucleotide nucleotidyltransferase family. Requires Mg(2+) as cofactor.

It localises to the cytoplasm. It catalyses the reaction RNA(n+1) + phosphate = RNA(n) + a ribonucleoside 5'-diphosphate. Functionally, involved in mRNA degradation. Catalyzes the phosphorolysis of single-stranded polyribonucleotides processively in the 3'- to 5'-direction. The sequence is that of Polyribonucleotide nucleotidyltransferase from Desulfotalea psychrophila (strain LSv54 / DSM 12343).